The chain runs to 64 residues: Large ribosomal subunit protein bL35 (64 aa).

Basic residues predominate over residues 1–15; it reads MPKNKTHSGTAKRFR. A disordered region spans residues 1-27; the sequence is MPKNKTHSGTAKRFRVTGSGKLRREQA.

It belongs to the bacterial ribosomal protein bL35 family.

In Saccharopolyspora erythraea (strain ATCC 11635 / DSM 40517 / JCM 4748 / NBRC 13426 / NCIMB 8594 / NRRL 2338), this protein is Large ribosomal subunit protein bL35.